Reading from the N-terminus, the 477-residue chain is Trigger factor (477 aa).

The PPIase FKBP-type domain maps to 169–254 (EDRVTIDYLG…VKEVAKPNEL (86 aa)). The disordered stretch occupies residues 435 to 477 (VSKEELTAEDEDAASEAKPAKKAAAKKKAAPKKKAEEGKSEEA). Residues 454–466 (AKKAAAKKKAAPK) show a composition bias toward basic residues. Over residues 467-477 (KKAEEGKSEEA) the composition is skewed to basic and acidic residues.

It belongs to the FKBP-type PPIase family. Tig subfamily.

The protein resides in the cytoplasm. It catalyses the reaction [protein]-peptidylproline (omega=180) = [protein]-peptidylproline (omega=0). Functionally, involved in protein export. Acts as a chaperone by maintaining the newly synthesized protein in an open conformation. Functions as a peptidyl-prolyl cis-trans isomerase. The sequence is that of Trigger factor from Brucella suis biovar 1 (strain 1330).